We begin with the raw amino-acid sequence, 365 residues long: Chorismate synthase (365 aa).

Residue arginine 47 coordinates NADP(+). FMN-binding positions include 124-126, glycine 287, 302-306, and arginine 328; these read RAS and KPTAT.

This sequence belongs to the chorismate synthase family. In terms of assembly, homotetramer. The cofactor is FMNH2.

It carries out the reaction 5-O-(1-carboxyvinyl)-3-phosphoshikimate = chorismate + phosphate. It participates in metabolic intermediate biosynthesis; chorismate biosynthesis; chorismate from D-erythrose 4-phosphate and phosphoenolpyruvate: step 7/7. Catalyzes the anti-1,4-elimination of the C-3 phosphate and the C-6 proR hydrogen from 5-enolpyruvylshikimate-3-phosphate (EPSP) to yield chorismate, which is the branch point compound that serves as the starting substrate for the three terminal pathways of aromatic amino acid biosynthesis. This reaction introduces a second double bond into the aromatic ring system. This Prochlorococcus marinus (strain MIT 9215) protein is Chorismate synthase.